Consider the following 276-residue polypeptide: Rhomboid protease GlpG (276 aa).

Transmembrane regions (helical) follow at residues 94-114 (GPVT…MQIL), 142-162 (ALMH…WYLG), 169-189 (LGSG…GYVQ), 192-212 (FSGP…GYVW), 229-249 (LIIF…GMSM), and 250-270 (ANGA…VDSL). Ser-201 functions as the Nucleophile in the catalytic mechanism. The active site involves His-254.

The protein belongs to the peptidase S54 family.

It is found in the cell inner membrane. It catalyses the reaction Cleaves type-1 transmembrane domains using a catalytic dyad composed of serine and histidine that are contributed by different transmembrane domains.. In terms of biological role, rhomboid-type serine protease that catalyzes intramembrane proteolysis. This Escherichia coli O81 (strain ED1a) protein is Rhomboid protease GlpG.